Here is a 235-residue protein sequence, read N- to C-terminus: MFDPFLEELQTGIQARGGISVEVPAGLEHNQSQKGSSTIQSWLWQVPGFRRWRVTRLDAGDSLQVLNSVAYPDFDLDHPLMGVDLLWFGARQKLVAVLDFQPLVQDKDYLDRHFDGLKDLNARFPDLNGEETMRSFDPNQYFSSWLLFCRGGSEEADRSLPKAFSAFLKAYWGLHDEASKEPSSISPGDVERLQNAYDVYSAERDPAHGLFTSHFGKEWSDRFLHEFLFPASQPA.

Belongs to the HY2 family.

It catalyses the reaction 15,16-dihydrobiliverdin + oxidized 2[4Fe-4S]-[ferredoxin] = biliverdin IXalpha + reduced 2[4Fe-4S]-[ferredoxin] + 2 H(+). In terms of biological role, catalyzes the two-electron reduction of biliverdin IX-alpha at the C15 methine bridge. The protein is 15,16-dihydrobiliverdin:ferredoxin oxidoreductase (pebA) of Parasynechococcus marenigrum (strain WH8102).